Here is a 287-residue protein sequence, read N- to C-terminus: Putative sugar uptake protein spyM18_2243 (287 aa).

10 consecutive transmembrane segments (helical) span residues 4-26 (IFYALIPMFTWGSIGFVSNKIGG), 33-50 (LGMTFGALLFSLAVWLIV), 55-72 (TLQLWLFGILGGFIWSIG), 85-107 (VSVANPLSSGSQLVLGSLIGVLV), 117-134 (FVVGSLALLLLIVGFYFS), 154-171 (FRALTYSTIGYVMYAVLF), 181-200 (SVILPMAVGMVLGAITFMSF), 207-229 (YVIKNSVVGLLWGIGNIFMLLAA), 234-256 (LAIAFSFSQLGAIISIVGGILFL), and 268-285 (VVTGIICFIVGAILLGVV).

It belongs to the GRP transporter (TC 2.A.7.5) family.

The protein resides in the cell membrane. The polypeptide is Putative sugar uptake protein spyM18_2243 (Streptococcus pyogenes serotype M18 (strain MGAS8232)).